Reading from the N-terminus, the 510-residue chain is UDP-N-acetylmuramoyl-tripeptide--D-alanyl-D-alanine ligase (510 aa).

An ATP-binding site is contributed by 136-142; that stretch reads GSSGKTS.

It belongs to the MurCDEF family. MurF subfamily.

The protein resides in the cytoplasm. The catalysed reaction is D-alanyl-D-alanine + UDP-N-acetyl-alpha-D-muramoyl-L-alanyl-gamma-D-glutamyl-meso-2,6-diaminopimelate + ATP = UDP-N-acetyl-alpha-D-muramoyl-L-alanyl-gamma-D-glutamyl-meso-2,6-diaminopimeloyl-D-alanyl-D-alanine + ADP + phosphate + H(+). The protein operates within cell wall biogenesis; peptidoglycan biosynthesis. Functionally, involved in cell wall formation. Catalyzes the final step in the synthesis of UDP-N-acetylmuramoyl-pentapeptide, the precursor of murein. This is UDP-N-acetylmuramoyl-tripeptide--D-alanyl-D-alanine ligase from Mycobacterium tuberculosis (strain CDC 1551 / Oshkosh).